Here is a 1477-residue protein sequence, read N- to C-terminus: Alpha-1-inhibitor 3 (1477 aa).

Residues 1 to 24 form the signal peptide; it reads MKKDREAQLCLFSALLAFLPFASL. A disulfide bridge links C48 with C86. Residues N55 and N247 are each glycosylated (N-linked (GlcNAc...) asparagine). 2 disulfide bridges follow: C251–C295 and C269–C283. N301, N321, N393, and N508 each carry an N-linked (GlcNAc...) asparagine glycan. Disulfide bonds link C468-C563, C595-C774, and C643-C678. The bait region (approximate) stretch occupies residues 601–750; it reads DQSVLLQKPE…TWIWDLVTVN (150 aa). Residues N750, N777, and N872 are each glycosylated (N-linked (GlcNAc...) asparagine). Cystine bridges form between C850–C886, C924–C1324, C1082–C1130, and C1355–C1470. Residues 975–978 constitute a cross-link (isoglutamyl cysteine thioester (Cys-Gln)); that stretch reads CGEQ. N994 is a glycosylation site (N-linked (GlcNAc...) asparagine). N1143, N1314, and N1427 each carry an N-linked (GlcNAc...) asparagine glycan.

It belongs to the protease inhibitor I39 (alpha-2-macroglobulin) family. In terms of assembly, monomer.

It is found in the secreted. In terms of biological role, protease inhibitor with a wide spectrum of protein targets, which attaches through its thioester function. The polypeptide is Alpha-1-inhibitor 3 (A1i3) (Rattus norvegicus (Rat)).